Reading from the N-terminus, the 235-residue chain is Phosphoribosylaminoimidazole-succinocarboxamide synthase (235 aa).

Belongs to the SAICAR synthetase family.

The catalysed reaction is 5-amino-1-(5-phospho-D-ribosyl)imidazole-4-carboxylate + L-aspartate + ATP = (2S)-2-[5-amino-1-(5-phospho-beta-D-ribosyl)imidazole-4-carboxamido]succinate + ADP + phosphate + 2 H(+). It functions in the pathway purine metabolism; IMP biosynthesis via de novo pathway; 5-amino-1-(5-phospho-D-ribosyl)imidazole-4-carboxamide from 5-amino-1-(5-phospho-D-ribosyl)imidazole-4-carboxylate: step 1/2. This chain is Phosphoribosylaminoimidazole-succinocarboxamide synthase (purC), found in Streptococcus pneumoniae serotype 4 (strain ATCC BAA-334 / TIGR4).